The following is a 596-amino-acid chain: Tripeptidyl-peptidase SED2 (596 aa).

A signal peptide spans 1 to 16; sequence MLVLKFVCLLASVAAA. Residues 18–203 constitute a propeptide, removed in mature form; that stretch reads PTSWSSHKVV…LEAMSEEEFS (186 aa). Positions 210 to 596 constitute a Peptidase S53 domain; it reads LVTTACLREL…NFQALTKVLP (387 aa). The N-linked (GlcNAc...) asparagine glycan is linked to Asn265. Catalysis depends on charge relay system residues Glu286 and Asp290. Asn403 carries an N-linked (GlcNAc...) asparagine glycan. Ser501 functions as the Charge relay system in the catalytic mechanism. The Ca(2+) site is built by Asp543 and Ile544. Asn572 carries an N-linked (GlcNAc...) asparagine glycan. Residues Gly576 and Asp578 each coordinate Ca(2+).

The cofactor is Ca(2+).

The protein resides in the secreted. It localises to the extracellular space. It carries out the reaction Release of an N-terminal tripeptide from a polypeptide.. In terms of biological role, secreted tripeptidyl-peptidase which degrades proteins at acidic pHs and is involved in virulence. The sequence is that of Tripeptidyl-peptidase SED2 (SED2) from Arthroderma otae (strain ATCC MYA-4605 / CBS 113480) (Microsporum canis).